The following is a 127-amino-acid chain: PanD regulatory factor (127 aa).

Residues 1–127 (MKLTIIRLEK…TAQQGGWEKC (127 aa)) form the N-acetyltransferase domain. Interaction with PanD regions lie at residues 43–48 (RFNERL) and 66–76 (LRVREVTRRRG). CoA-binding positions include 66–68 (LRV) and 72–79 (TRRRGVGQ).

It belongs to the PanZ/PanM family. As to quaternary structure, interacts with PanD in the presence of CoA. Forms a heterooctameric complex composed of four PanD subunits and four PanZ subunits. Monomer in solution.

Its activity is regulated as follows. Activation of PanD processing occurs even at low CoA concentrations. In contrast, full inhibition of PanD catalytic activity only occurs at sufficiently high CoA concentrations. Controls both the activation and catalytic activity of PanD in a coenzyme A (CoA)-dependent fashion. Binding of CoA or a derivative to PanZ leads to interaction with PanD, which promotes the processing and activation of pro-PanD, and subsequent substrate-mediated inhibition of the active form of PanD. Inhibition of PanD activity is probably the primary metabolic role of PanZ, allowing negative feedback regulation of pantothenate biosynthesis by CoA. This Escherichia coli (strain K12) protein is PanD regulatory factor.